The following is a 376-amino-acid chain: 23S rRNA (uracil(747)-C(5))-methyltransferase RlmC (376 aa).

[4Fe-4S] cluster-binding residues include Cys-3, Cys-11, Cys-14, and Cys-87. Residues Gln-212, Phe-241, Glu-262, and Asn-307 each coordinate S-adenosyl-L-methionine. Cys-334 acts as the Nucleophile in catalysis.

This sequence belongs to the class I-like SAM-binding methyltransferase superfamily. RNA M5U methyltransferase family. RlmC subfamily.

The catalysed reaction is uridine(747) in 23S rRNA + S-adenosyl-L-methionine = 5-methyluridine(747) in 23S rRNA + S-adenosyl-L-homocysteine + H(+). Its function is as follows. Catalyzes the formation of 5-methyl-uridine at position 747 (m5U747) in 23S rRNA. In Salmonella choleraesuis (strain SC-B67), this protein is 23S rRNA (uracil(747)-C(5))-methyltransferase RlmC.